Reading from the N-terminus, the 155-residue chain is Ciliary microtubule inner protein 2C (155 aa).

Belongs to the CIMIP2 family.

The protein resides in the cytoplasm. It localises to the cytoskeleton. It is found in the cilium axoneme. Microtubule inner protein (MIP) part of the dynein-decorated doublet microtubules (DMTs) in cilia axoneme, which is required for motile cilia beating. The protein is Ciliary microtubule inner protein 2C (cimip2cb) of Xenopus laevis (African clawed frog).